Here is a 290-residue protein sequence, read N- to C-terminus: ATP synthase gamma chain (290 aa).

The protein belongs to the ATPase gamma chain family. As to quaternary structure, F-type ATPases have 2 components, CF(1) - the catalytic core - and CF(0) - the membrane proton channel. CF(1) has five subunits: alpha(3), beta(3), gamma(1), delta(1), epsilon(1). CF(0) has three main subunits: a, b and c.

The protein resides in the cell membrane. Produces ATP from ADP in the presence of a proton gradient across the membrane. The gamma chain is believed to be important in regulating ATPase activity and the flow of protons through the CF(0) complex. The polypeptide is ATP synthase gamma chain (Wolbachia pipientis subsp. Culex pipiens (strain wPip)).